The sequence spans 234 residues: Putative methyltransferase-like protein 15P1 (234 aa).

Residues 100–102 (GGH), aspartate 119, phenylalanine 146, aspartate 169, and glutamine 176 each bind S-adenosyl-L-methionine.

It belongs to the methyltransferase superfamily. RsmH family.

Functionally, probable S-adenosyl-L-methionine-dependent methyltransferase. The protein is Putative methyltransferase-like protein 15P1 (METTL15P1) of Homo sapiens (Human).